The chain runs to 423 residues: AP-1 complex subunit mu-2 (423 aa).

One can recognise an MHD domain in the interval 168–421; it reads KNEVFIDVIE…ITQSGDYQLR (254 aa).

Belongs to the adaptor complexes medium subunit family. As to quaternary structure, adaptor protein complex 1 (AP-1) is a heterotetramer composed of two large adaptins (gamma-type subunit AP1G1 and beta-type subunit AP1B1), a medium adaptin (mu-type subunit AP1M1 or AP1M2) and a small adaptin (sigma-type subunit AP1S1 or AP1S2 or AP1S3). Interacts with P2X4. In terms of processing, phosphorylation of membrane-bound AP1M1/AP1M2 increases its affinity for sorting signals.

The protein localises to the golgi apparatus. Its subcellular location is the cytoplasmic vesicle. The protein resides in the clathrin-coated vesicle membrane. Its function is as follows. Subunit of clathrin-associated adaptor protein complex 1 that plays a role in protein sorting in the trans-Golgi network (TGN) and endosomes. The AP complexes mediate the recruitment of clathrin to membranes and the recognition of sorting signals within the cytosolic tails of transmembrane cargo molecules. The chain is AP-1 complex subunit mu-2 (Ap1m2) from Rattus norvegicus (Rat).